Here is a 440-residue protein sequence, read N- to C-terminus: Xylose isomerase (440 aa).

Residues His-101 and Asp-104 contribute to the active site. 7 residues coordinate Mg(2+): Glu-232, Glu-268, His-271, Asp-296, Asp-307, Asp-309, and Asp-339.

The protein belongs to the xylose isomerase family. Homotetramer. Requires Mg(2+) as cofactor.

Its subcellular location is the cytoplasm. The enzyme catalyses alpha-D-xylose = alpha-D-xylulofuranose. The sequence is that of Xylose isomerase from Enterobacter sp. (strain 638).